Here is a 946-residue protein sequence, read N- to C-terminus: Inter-alpha-trypsin inhibitor heavy chain H2 (946 aa).

A signal peptide spans 1 to 18 (MKRLTCFFICFFLSEVSG). A propeptide spanning residues 19–54 (FEIPINGLSEFVDYEDLVELAPGKFQLVAENRRYQR) is cleaved from the precursor. The VIT domain occupies 56–185 (LPGESEEMME…KVQFELHYQE (130 aa)). The residue at position 60 (Ser60) is a Phosphoserine; by FAM20C. Residue Asn118 is glycosylated (N-linked (GlcNAc...) (complex) asparagine). The cysteines at positions 261 and 264 are disulfide-linked. Residues Glu282 and Glu283 each carry the 4-carboxyglutamate modification. Residues 308-468 (PKNILFVIDV…YDFLKRLSNE (161 aa)) enclose the VWFA domain. An N-linked (GlcNAc...) asparagine glycan is attached at Asn445. Position 466 is a phosphoserine; by FAM20C (Ser466). Cys650 and Cys651 are joined by a disulfide. Positions 665–679 (STPSWANPSPTPVIS) are O-glycosylated at three sites. O-linked (GalNAc...) threonine; partial glycosylation is present at Thr666. O-linked (GalNAc...) serine glycosylation is present at Ser673. O-linked (GalNAc...) threonine glycans are attached at residues Thr675 and Thr691. At Asp702 the chain carries Aspartate 1-(chondroitin 4-sulfate)-ester. Residues 703–946 (PHFIIYLPKS…PQLYSFLKRP (244 aa)) constitute a propeptide that is removed on maturation. Ser886 carries the post-translational modification Phosphoserine; by FAM20C.

I-alpha-I plasma protease inhibitors are assembled from one or two heavy chains (HC) and one light chain, bikunin. Inter-alpha-inhibitor (I-alpha-I) is composed of ITIH1/HC1, ITIH2/HC2 and bikunin. In terms of processing, heavy chains are linked to bikunin via chondroitin 4-sulfate esterified to the alpha-carboxyl of the C-terminal aspartate after propeptide cleavage. N- and O-glycosylated. O-glycosylated with core 1 or possibly core 8 glycans. Post-translationally, phosphorylated by FAM20C in the extracellular medium. As to expression, plasma.

It localises to the secreted. In terms of biological role, may act as a carrier of hyaluronan in serum or as a binding protein between hyaluronan and other matrix protein, including those on cell surfaces in tissues to regulate the localization, synthesis and degradation of hyaluronan which are essential to cells undergoing biological processes. The polypeptide is Inter-alpha-trypsin inhibitor heavy chain H2 (ITIH2) (Homo sapiens (Human)).